We begin with the raw amino-acid sequence, 238 residues long: 7-cyano-7-deazaguanine synthase (238 aa).

12-22 contributes to the ATP binding site; sequence FSGGQDSGTCL. Zn(2+) is bound by residues Cys-200, Cys-215, Cys-218, and Cys-221.

This sequence belongs to the QueC family. Requires Zn(2+) as cofactor.

It catalyses the reaction 7-carboxy-7-deazaguanine + NH4(+) + ATP = 7-cyano-7-deazaguanine + ADP + phosphate + H2O + H(+). The protein operates within purine metabolism; 7-cyano-7-deazaguanine biosynthesis. In terms of biological role, catalyzes the ATP-dependent conversion of 7-carboxy-7-deazaguanine (CDG) to 7-cyano-7-deazaguanine (preQ(0)). This Lawsonia intracellularis (strain PHE/MN1-00) protein is 7-cyano-7-deazaguanine synthase.